Here is a 349-residue protein sequence, read N- to C-terminus: tRNA pseudouridine synthase D (349 aa).

Phe-26 is a binding site for substrate. The active-site Nucleophile is Asp-79. Asn-128 serves as a coordination point for substrate. One can recognise a TRUD domain in the interval 154–303; sequence GVPNYFGSQR…VDAARRAMLV (150 aa). Phe-329 serves as a coordination point for substrate.

Belongs to the pseudouridine synthase TruD family.

It carries out the reaction uridine(13) in tRNA = pseudouridine(13) in tRNA. In terms of biological role, responsible for synthesis of pseudouridine from uracil-13 in transfer RNAs. This Erwinia tasmaniensis (strain DSM 17950 / CFBP 7177 / CIP 109463 / NCPPB 4357 / Et1/99) protein is tRNA pseudouridine synthase D.